The following is a 141-amino-acid chain: Hemoglobin subunit alpha (141 aa).

Positions 1–141 (VLSSDDKCNV…VSSVLTSKYR (141 aa)) constitute a Globin domain. Residue His58 coordinates O2. His87 serves as a coordination point for heme b.

The protein belongs to the globin family. Heterotetramer of two alpha chains and two beta chains. As to expression, red blood cells.

Involved in oxygen transport from the lung to the various peripheral tissues. Has antimicrobial activity against B.subtilis ATCC 6633. Has antioxidant activity. In Crocodylus siamensis (Siamese crocodile), this protein is Hemoglobin subunit alpha.